The chain runs to 469 residues: 3-isopropylmalate dehydratase large subunit (469 aa).

Positions 349, 409, and 412 each coordinate [4Fe-4S] cluster.

Belongs to the aconitase/IPM isomerase family. LeuC type 1 subfamily. In terms of assembly, heterodimer of LeuC and LeuD. Requires [4Fe-4S] cluster as cofactor.

It carries out the reaction (2R,3S)-3-isopropylmalate = (2S)-2-isopropylmalate. It functions in the pathway amino-acid biosynthesis; L-leucine biosynthesis; L-leucine from 3-methyl-2-oxobutanoate: step 2/4. Its function is as follows. Catalyzes the isomerization between 2-isopropylmalate and 3-isopropylmalate, via the formation of 2-isopropylmaleate. This Methylorubrum populi (strain ATCC BAA-705 / NCIMB 13946 / BJ001) (Methylobacterium populi) protein is 3-isopropylmalate dehydratase large subunit.